The following is a 543-amino-acid chain: CTP synthase (543 aa).

The segment at 1-265 (MTRFVFITGG…DQEVLRYFDL (265 aa)) is amidoligase domain. Residue S13 participates in CTP binding. S13 contributes to the UTP binding site. ATP is bound at residue 14–19 (SLGKGI). Y54 is a binding site for L-glutamine. Residue D71 participates in ATP binding. D71 and E139 together coordinate Mg(2+). Residues 146 to 148 (DIE), 186 to 191 (KTKPTQ), and K222 each bind CTP. UTP-binding positions include 186 to 191 (KTKPTQ) and K222. The Glutamine amidotransferase type-1 domain maps to 291–542 (RVAIVGKYTA…IAAAVKEAHR (252 aa)). G354 contributes to the L-glutamine binding site. The active-site Nucleophile; for glutamine hydrolysis is the C381. L-glutamine is bound by residues 382–385 (FGMQ), E405, and R470. Residues H515 and E517 contribute to the active site.

It belongs to the CTP synthase family. Homotetramer.

It carries out the reaction UTP + L-glutamine + ATP + H2O = CTP + L-glutamate + ADP + phosphate + 2 H(+). The catalysed reaction is L-glutamine + H2O = L-glutamate + NH4(+). It catalyses the reaction UTP + NH4(+) + ATP = CTP + ADP + phosphate + 2 H(+). It participates in pyrimidine metabolism; CTP biosynthesis via de novo pathway; CTP from UDP: step 2/2. With respect to regulation, allosterically activated by GTP, when glutamine is the substrate; GTP has no effect on the reaction when ammonia is the substrate. The allosteric effector GTP functions by stabilizing the protein conformation that binds the tetrahedral intermediate(s) formed during glutamine hydrolysis. Inhibited by the product CTP, via allosteric rather than competitive inhibition. Functionally, catalyzes the ATP-dependent amination of UTP to CTP with either L-glutamine or ammonia as the source of nitrogen. Regulates intracellular CTP levels through interactions with the four ribonucleotide triphosphates. The chain is CTP synthase from Gluconobacter oxydans (strain 621H) (Gluconobacter suboxydans).